The chain runs to 767 residues: Serine/threonine-protein kinase DCLK2 (767 aa).

Positions 1–44 (MASTRSIELEHFEERDKRPRPGSRRGAPSSSGGSSISGPKGNGL) are disordered. The span at 7-19 (IELEHFEERDKRP) shows a compositional bias: basic and acidic residues. The segment covering 24–43 (RRGAPSSSGGSSISGPKGNG) has biased composition (low complexity). Residue Thr-61 is modified to Phosphothreonine. Doublecortin domains lie at 72–158 (KKAR…VDYT) and 196–279 (KLVT…AQDD). Residues 301 to 311 (KYSGSRSPGLS) show a composition bias toward low complexity. Residues 301-391 (KYSGSRSPGL…GPELDRCMSP (91 aa)) are disordered. Over residues 327–338 (SAYSTAKSPVNG) the composition is skewed to polar residues. The segment covering 339-362 (TPSSQLSTPKSTKSSSSSPTSPGS) has biased composition (low complexity). A compositionally biased stretch (polar residues) spans 369–380 (ISAQGRSSSNVN). Residue Ser-377 is modified to Phosphoserine. Positions 409–666 (YRIGKVIGDG…AGEILSHPWV (258 aa)) constitute a Protein kinase domain. Residues 415 to 423 (IGDGNFAVV) and Lys-438 each bind ATP. Asp-530 serves as the catalytic Proton acceptor. Phosphoserine is present on Ser-662. Position 681 is a phosphothreonine (Thr-681). Residues 721–734 (HCRDSSKSSREQTS) are compositionally biased toward basic and acidic residues. Residues 721–767 (HCRDSSKSSREQTSAREAPPPPESPRPPGPPATSGCDPAGTWRRHRD) form a disordered region. Residues 738–751 (APPPPESPRPPGPP) show a composition bias toward pro residues.

This sequence belongs to the protein kinase superfamily. CAMK Ser/Thr protein kinase family. CaMK subfamily. As to quaternary structure, interacts with MAPK8IP1/JIP-1, MAPK8IP2/JIP-2, MAPK9/JNK2, PPP1R9B/NEURABIN-2 and actin. Binds to and stabilizes microtubules; binding affinity is strongly reduced by autophosphorylation. In terms of processing, autophosphorylated.

It is found in the cytoplasm. The protein resides in the cytoskeleton. It carries out the reaction L-seryl-[protein] + ATP = O-phospho-L-seryl-[protein] + ADP + H(+). The catalysed reaction is L-threonyl-[protein] + ATP = O-phospho-L-threonyl-[protein] + ADP + H(+). Its function is as follows. Protein kinase with a significantly reduced Ca(2+)+/CAM affinity and dependence compared to other members of the CaMK family. May play a role in the down-regulation of CRE-dependent gene activation probably by phosphorylation of the CREB coactivator CRTC2/TORC2 and the resulting retention of TORC2 in the cytoplasm. This is Serine/threonine-protein kinase DCLK2 (Dclk2) from Rattus norvegicus (Rat).